A 553-amino-acid chain; its full sequence is COP9 signalosome complex subunit 10 (553 aa).

The span at 21-46 shows a compositional bias: acidic residues; that stretch reads AEMEEDSDEMGVYEEETSQGAEEEVP. The interval 21–47 is disordered; sequence AEMEEDSDEMGVYEEETSQGAEEEVPL. Positions 298–474 constitute a PCI domain; the sequence is LRTHFSACLQ…DYVYFGDEPR (177 aa).

As to quaternary structure, component of a COP9 signalosome-like (CSN) complex.

Its subcellular location is the cytoplasm. The protein localises to the nucleus. Functionally, component of the COP9 signalosome (CSN) complex that acts as an regulator of the ubiquitin (Ubl) conjugation pathway by mediating the deneddylation of the cullin subunit of SCF-type E3 ubiquitin-protein ligase complexes. The CSN complex is involved in the regulation of the mating pheromone response. In Eremothecium gossypii (strain ATCC 10895 / CBS 109.51 / FGSC 9923 / NRRL Y-1056) (Yeast), this protein is COP9 signalosome complex subunit 10 (RRI2).